We begin with the raw amino-acid sequence, 95 residues long: Putative ESAT-6-like protein X (95 aa).

Residues 72–95 (HGQKVQRASSSMADTDRSVSSAWS) form a disordered region.

This sequence belongs to the WXG100 family.

The chain is Putative ESAT-6-like protein X from Mycobacterium leprae (strain TN).